We begin with the raw amino-acid sequence, 341 residues long: THO complex subunit 6 homolog (341 aa).

WD repeat units lie at residues 22 to 61 (RLHM…SSEA), 74 to 112 (AHDG…GCKE), 124 to 163 (LEVP…FTRA), 166 to 205 (GHTD…EVQT), 215 to 254 (SRPH…PTTV), 256 to 293 (PIRA…KAQV), and 295 to 339 (GSSP…AFSL). S180 bears the Phosphoserine mark.

It belongs to the WD repeat THOC6 family. As to quaternary structure, component of the THO subcomplex, which is composed of THOC1, THOC2, THOC3, THOC5, THOC6 and THOC7. The THO subcomplex interacts with DDX39B to form the THO-DDX39B complex which multimerizes into a 28-subunit tetrameric assembly. Component of the transcription/export (TREX) complex at least composed of ALYREF/THOC4, DDX39B, SARNP/CIP29, CHTOP and the THO subcomplex; in the complex interacts with THOC5; together with THOC5 and THOC7, plays a key structural role in the oligomerization of the THO-DDX39B complex. TREX seems to have a dynamic structure involving ATP-dependent remodeling.

It is found in the nucleus. Its subcellular location is the nucleus speckle. Component of the THO subcomplex of the TREX complex which is thought to couple mRNA transcription, processing and nuclear export, and which specifically associates with spliced mRNA and not with unspliced pre-mRNA. Plays a key structural role in the oligomerization of the THO-DDX39B complex. TREX is recruited to spliced mRNAs by a transcription-independent mechanism, binds to mRNA upstream of the exon-junction complex (EJC) and is recruited in a splicing- and cap-dependent manner to a region near the 5' end of the mRNA where it functions in mRNA export to the cytoplasm via the TAP/NXF1 pathway. Plays a role in apoptosis negative control involved in brain development. The polypeptide is THO complex subunit 6 homolog (Thoc6) (Rattus norvegicus (Rat)).